The following is a 390-amino-acid chain: Phosphopentomutase (390 aa).

The Mn(2+) site is built by Asp-9, Asp-283, His-288, Asp-324, His-325, and His-336.

The protein belongs to the phosphopentomutase family. The cofactor is Mn(2+).

It is found in the cytoplasm. It carries out the reaction 2-deoxy-alpha-D-ribose 1-phosphate = 2-deoxy-D-ribose 5-phosphate. The catalysed reaction is alpha-D-ribose 1-phosphate = D-ribose 5-phosphate. It participates in carbohydrate degradation; 2-deoxy-D-ribose 1-phosphate degradation; D-glyceraldehyde 3-phosphate and acetaldehyde from 2-deoxy-alpha-D-ribose 1-phosphate: step 1/2. Its function is as follows. Isomerase that catalyzes the conversion of deoxy-ribose 1-phosphate (dRib-1-P) and ribose 1-phosphate (Rib-1-P) to deoxy-ribose 5-phosphate (dRib-5-P) and ribose 5-phosphate (Rib-5-P), respectively. This Thermotoga petrophila (strain ATCC BAA-488 / DSM 13995 / JCM 10881 / RKU-1) protein is Phosphopentomutase.